The primary structure comprises 266 residues: ATP synthase subunit a (266 aa).

Helical transmembrane passes span 33–53 (FWTL…LFLA), 95–115 (VIAP…LMDL), 141–161 (DVNI…FYSI), 206–226 (LFGN…LLPW), and 237–257 (AIFH…LTIV).

This sequence belongs to the ATPase A chain family. F-type ATPases have 2 components, CF(1) - the catalytic core - and CF(0) - the membrane proton channel. CF(1) has five subunits: alpha(3), beta(3), gamma(1), delta(1), epsilon(1). CF(0) has three main subunits: a(1), b(2) and c(9-12). The alpha and beta chains form an alternating ring which encloses part of the gamma chain. CF(1) is attached to CF(0) by a central stalk formed by the gamma and epsilon chains, while a peripheral stalk is formed by the delta and b chains.

The protein localises to the cell inner membrane. Its function is as follows. Key component of the proton channel; it plays a direct role in the translocation of protons across the membrane. The polypeptide is ATP synthase subunit a (Klebsiella pneumoniae subsp. pneumoniae (strain ATCC 700721 / MGH 78578)).